A 92-amino-acid chain; its full sequence is Small ribosomal subunit protein uS19 (92 aa).

Belongs to the universal ribosomal protein uS19 family.

Its function is as follows. Protein S19 forms a complex with S13 that binds strongly to the 16S ribosomal RNA. This is Small ribosomal subunit protein uS19 from Aliivibrio salmonicida (strain LFI1238) (Vibrio salmonicida (strain LFI1238)).